Here is a 141-residue protein sequence, read N- to C-terminus: Galactose-6-phosphate isomerase subunit LacA (141 aa).

Belongs to the LacAB/RpiB family. As to quaternary structure, heteromultimeric protein consisting of LacA and LacB.

The enzyme catalyses aldehydo-D-galactose 6-phosphate = keto-D-tagatose 6-phosphate. It participates in carbohydrate metabolism; D-galactose 6-phosphate degradation; D-tagatose 6-phosphate from D-galactose 6-phosphate: step 1/1. In Streptococcus equi subsp. equi (strain 4047), this protein is Galactose-6-phosphate isomerase subunit LacA.